The following is a 968-amino-acid chain: RNA polymerase-associated protein RapA (968 aa).

The Helicase ATP-binding domain maps to 164–334 (DVGRRHAPRV…FARLRLLDPN (171 aa)). Residue 177–184 (DEVGLGKT) coordinates ATP. The DEAH box motif lies at 280 to 283 (DEAH). One can recognise a Helicase C-terminal domain in the interval 490–685 (RVEWLMGYLT…ALKAQLEQGR (196 aa)).

Belongs to the SNF2/RAD54 helicase family. RapA subfamily. Interacts with the RNAP. Has a higher affinity for the core RNAP than for the holoenzyme. Its ATPase activity is stimulated by binding to RNAP.

Functionally, transcription regulator that activates transcription by stimulating RNA polymerase (RNAP) recycling in case of stress conditions such as supercoiled DNA or high salt concentrations. Probably acts by releasing the RNAP, when it is trapped or immobilized on tightly supercoiled DNA. Does not activate transcription on linear DNA. Probably not involved in DNA repair. This chain is RNA polymerase-associated protein RapA, found in Salmonella paratyphi C (strain RKS4594).